A 153-amino-acid chain; its full sequence is Vasotocin-neurophysin VT 1 (153 aa).

Positions 1–20 are cleaved as a signal peptide; the sequence is MPYSTFPLLWVLGLLALSSA. Residues Cys21 and Cys26 are joined by a disulfide bond. Residue Gly29 is modified to Glycine amide. 7 disulfide bridges follow: Cys41-Cys85, Cys44-Cys58, Cys52-Cys75, Cys59-Cys65, Cys92-Cys104, Cys98-Cys116, and Cys105-Cys110.

The protein belongs to the vasopressin/oxytocin family. In terms of processing, seven disulfide bonds are present in neurophysin.

Its subcellular location is the secreted. Its function is as follows. Vasotocin is an antidiuretic hormone. This Oncorhynchus keta (Chum salmon) protein is Vasotocin-neurophysin VT 1.